A 423-amino-acid chain; its full sequence is NADP-specific glutamate dehydrogenase (423 aa).

K112 is an active-site residue.

This sequence belongs to the Glu/Leu/Phe/Val dehydrogenases family. Homohexamer.

The catalysed reaction is L-glutamate + NADP(+) + H2O = 2-oxoglutarate + NH4(+) + NADPH + H(+). The chain is NADP-specific glutamate dehydrogenase (gdhA) from Saccharolobus shibatae (strain ATCC 51178 / DSM 5389 / JCM 8931 / NBRC 15437 / B12) (Sulfolobus shibatae).